The sequence spans 174 residues: Endoribonuclease YbeY (174 aa).

Residues His133, His137, and His143 each coordinate Zn(2+).

It belongs to the endoribonuclease YbeY family. Requires Zn(2+) as cofactor.

It is found in the cytoplasm. Functionally, single strand-specific metallo-endoribonuclease involved in late-stage 70S ribosome quality control and in maturation of the 3' terminus of the 16S rRNA. This Paracoccus denitrificans (strain Pd 1222) protein is Endoribonuclease YbeY.